The sequence spans 737 residues: Protein penguin (737 aa).

The interval 1-128 (MVSSEPKGPA…EKKDLKLKRK (128 aa)) is disordered. 2 stretches are compositionally biased toward basic and acidic residues: residues 76–89 (KKFD…DKRL) and 107–122 (EGEK…EKKD). The region spanning 139–490 (EANQIHEKLR…EILEQIEAPI (352 aa)) is the PUM-HD domain. Pumilio repeat units lie at residues 167 to 202 (NVGD…EISE), 203 to 238 (KLLP…KLVD), 239 to 274 (SLYG…YMRQ), 388 to 425 (NIKE…AIYD), and 426 to 462 (HLHG…EFIR). A disordered region spans residues 577–638 (VESSSDDEDE…EEEPAAPLVS (62 aa)). A compositionally biased stretch (acidic residues) spans 580–600 (SSDDEDEDEDEDEESDDEGDE). The span at 601-615 (KEQKEAAADDAEPKV) shows a compositional bias: basic and acidic residues. The segment covering 616–626 (KKAKKEPKKPK) has biased composition (basic residues).

This is Protein penguin from Drosophila melanogaster (Fruit fly).